The chain runs to 802 residues: Copper-exporting P-type ATPase (802 aa).

2 HMA domains span residues Lys5–Val71 and Glu73–Lys139. Residues Cys16, Cys19, Cys84, and Cys87 each contribute to the Cu(+) site. 6 helical membrane passes run Leu162–Thr181, Trp196–Tyr218, Val230–Gln249, Gly259–Phe278, Ile412–Trp434, and Phe447–Ala469. Asp499 serves as the catalytic 4-aspartylphosphate intermediate. Mg(2+) is bound by residues Asp698 and Asp702. A run of 2 helical transmembrane segments spans residues Leu756 to Leu775 and Ile779 to Leu796.

Belongs to the cation transport ATPase (P-type) (TC 3.A.3) family. Type IB subfamily. In terms of assembly, monomer at sub-stoichiometric copper concentrations. Homodimer at higher copper concentrations. Forms a heterodimer (electrostatic interactions) with CopZ during the transfer of Cu(+).

The protein resides in the cell membrane. The catalysed reaction is Cu(+)(in) + ATP + H2O = Cu(+)(out) + ADP + phosphate + H(+). Functionally, involved in copper export. The polypeptide is Copper-exporting P-type ATPase (copA) (Bacillus subtilis (strain 168)).